The sequence spans 570 residues: Phosphoenolpyruvate-protein phosphotransferase (570 aa).

The Tele-phosphohistidine intermediate role is filled by His189. Phosphoenolpyruvate contacts are provided by Arg296 and Arg332. 2 residues coordinate Mg(2+): Glu431 and Asp455. Phosphoenolpyruvate contacts are provided by residues 454 to 455 (ND) and Arg465. Cys502 (proton donor) is an active-site residue.

This sequence belongs to the PEP-utilizing enzyme family. Homodimer. Interacts with FloT. Mg(2+) serves as cofactor.

Its subcellular location is the cytoplasm. It is found in the membrane raft. It catalyses the reaction L-histidyl-[protein] + phosphoenolpyruvate = N(pros)-phospho-L-histidyl-[protein] + pyruvate. In terms of biological role, general (non sugar-specific) component of the phosphoenolpyruvate-dependent sugar phosphotransferase system (sugar PTS). This major carbohydrate active-transport system catalyzes the phosphorylation of incoming sugar substrates concomitantly with their translocation across the cell membrane. Enzyme I transfers the phosphoryl group from phosphoenolpyruvate (PEP) to the phosphoryl carrier protein (HPr). This Bacillus subtilis (strain 168) protein is Phosphoenolpyruvate-protein phosphotransferase (ptsI).